The following is a 66-amino-acid chain: Cysteine proteinase inhibitor (66 aa).

The short motif at 18 to 22 (QVVAG) is the Secondary area of contact element.

Belongs to the cystatin family. Phytocystatin subfamily. As to expression, in tubers of untreated plants. After ABA treatment or mechanical wounding is mostly accumulated in leaves, to a lesser extent in stems, but not in roots.

This chain is Cysteine proteinase inhibitor (CYS-PIN), found in Solanum tuberosum (Potato).